A 146-amino-acid polypeptide reads, in one-letter code: ATP synthase epsilon chain (146 aa).

The segment at 103–124 (QAERELGQLPEEEDEDSRRARE) is disordered.

It belongs to the ATPase epsilon chain family. As to quaternary structure, F-type ATPases have 2 components, CF(1) - the catalytic core - and CF(0) - the membrane proton channel. CF(1) has five subunits: alpha(3), beta(3), gamma(1), delta(1), epsilon(1). CF(0) has three main subunits: a, b and c.

The protein resides in the cell membrane. Produces ATP from ADP in the presence of a proton gradient across the membrane. In Rubrobacter xylanophilus (strain DSM 9941 / JCM 11954 / NBRC 16129 / PRD-1), this protein is ATP synthase epsilon chain.